A 351-amino-acid chain; its full sequence is Tsukushi-A (351 aa).

A signal peptide spans 1–17 (MALSSWIFFLLVHGIVG). LRR repeat units lie at residues 59–82 (PLDTSYLDLSSNRLKRINESVLSG), 85–108 (YTTLMNLNLSYNQIVKISYSTFSK), 109–132 (LRYLESLDLSHNLLETLPDGSFLY), 134–155 (RLTELDLSSNKIQKVGVGAFTL), 158–181 (QGRSMTINLANNEIHSIFRGAERP), 182–203 (VPNIHSLMLYGNQLLSVPDLHG), 204–226 (IPLRHLNLDRNPLSKIEKVSFLG), 252–276 (LTSLLELDLSNNPNLKSLSSDMFFG), and 277–300 (LKALQELNLAYSGVASLPKDIMLH).

As to quaternary structure, interacts with bmp4. Interacts with dll1 (via extracellular region). Interacts with fgf8; inhibits fgf8 signaling. Interacts with nodal2/Xnr2; enhances nodal2 activity. In terms of tissue distribution, during embryogenesis, localized to the animal hemisphere during late blastula and gastrula stages. At stage 10, expression is also detected around the dorsal blastopore lip. Expressed in the mandibular crest segment, branchial crest segment and differentiating somites at stage 21/22. Expressed in the germ ring including the shield at shield stage and in the tailbud at the 10-somite stage. At the early neurula stage (stage 13), expression is hardly detectable in the presumptive neural plate region, and restricted to the non-neural ectoderm where its levels increase by stage 14, especially in the presumptive anterior neural fold. Also expressed in the prospective cranial neural crest. At the early tailbud stage (stage 23), expressed in cranial neural crest cells, the dorsal retina and the lens placode.

The protein resides in the secreted. Its function is as follows. Contributes to various developmental events through its interactions with multiple signaling pathways. Dorsalizing factor which functions as an inhibitor of bone morphogenetic proteins (BMP) during gastrulation. Promotes dll1-dependent activation of Notch signaling and is required for neural crest formation. Induces endoderm and dorsal mesoderm formation by enhancing nodal2/Xnr2 activity while inhibiting ventrolateral mesoderm formation through inhibition of fgf8. In Xenopus laevis (African clawed frog), this protein is Tsukushi-A.